Here is a 135-residue protein sequence, read N- to C-terminus: Protein PsiE homolog (135 aa).

Helical transmembrane passes span 20–40, 54–74, 82–102, and 107–127; these read VGLL…TIHL, YLLI…ALIV, HFPL…LIIV, and PIDT…LYLA.

Belongs to the PsiE family.

Its subcellular location is the cell inner membrane. This Serratia proteamaculans (strain 568) protein is Protein PsiE homolog.